A 343-amino-acid chain; its full sequence is Heat-inducible transcription repressor HrcA (343 aa).

The protein belongs to the HrcA family.

Functionally, negative regulator of class I heat shock genes (grpE-dnaK-dnaJ and groELS operons). Prevents heat-shock induction of these operons. This Mycobacterium leprae (strain Br4923) protein is Heat-inducible transcription repressor HrcA.